Here is a 115-residue protein sequence, read N- to C-terminus: NADH-ubiquinone oxidoreductase chain 3 (115 aa).

Helical transmembrane passes span 3–23 (IMLTLLTNVTLASLLVLIAFW), 55–75 (FFLVAITFLLFDLEIALLLPL), and 86–106 (TMLTMALFLLILLAASLAYEW).

The protein belongs to the complex I subunit 3 family. As to quaternary structure, core subunit of respiratory chain NADH dehydrogenase (Complex I) which is composed of 45 different subunits. Interacts with TMEM186. Interacts with TMEM242.

It is found in the mitochondrion inner membrane. The enzyme catalyses a ubiquinone + NADH + 5 H(+)(in) = a ubiquinol + NAD(+) + 4 H(+)(out). Core subunit of the mitochondrial membrane respiratory chain NADH dehydrogenase (Complex I) which catalyzes electron transfer from NADH through the respiratory chain, using ubiquinone as an electron acceptor. Essential for the catalytic activity of complex I. The sequence is that of NADH-ubiquinone oxidoreductase chain 3 from Sus scrofa (Pig).